Reading from the N-terminus, the 219-residue chain is Orotate phosphoribosyltransferase (219 aa).

Position 26 (Lys26) interacts with 5-phospho-alpha-D-ribose 1-diphosphate. An orotate-binding site is contributed by 34 to 35 (FF). Residues 72 to 73 (YK), Arg98, Lys99, Lys102, His104, and 124 to 132 (DDVITAGTA) contribute to the 5-phospho-alpha-D-ribose 1-diphosphate site. The orotate site is built by Thr128 and Arg156.

This sequence belongs to the purine/pyrimidine phosphoribosyltransferase family. PyrE subfamily. As to quaternary structure, homodimer. Mg(2+) serves as cofactor.

It catalyses the reaction orotidine 5'-phosphate + diphosphate = orotate + 5-phospho-alpha-D-ribose 1-diphosphate. It functions in the pathway pyrimidine metabolism; UMP biosynthesis via de novo pathway; UMP from orotate: step 1/2. Functionally, catalyzes the transfer of a ribosyl phosphate group from 5-phosphoribose 1-diphosphate to orotate, leading to the formation of orotidine monophosphate (OMP). This chain is Orotate phosphoribosyltransferase, found in Xylella fastidiosa (strain M23).